The chain runs to 487 residues: Serine/threonine-protein phosphatase 2A activator 1 (487 aa).

2 disordered regions span residues 1–28 (MPMI…SSST) and 426–487 (GGIQ…PKPE).

It belongs to the PTPA-type PPIase family.

The protein localises to the cytoplasm. It localises to the nucleus. It catalyses the reaction [protein]-peptidylproline (omega=180) = [protein]-peptidylproline (omega=0). Functionally, PPIases accelerate the folding of proteins. It catalyzes the cis-trans isomerization of proline imidic peptide bonds in oligopeptides. Acts as a regulatory subunit for PP2A-like phosphatases modulating their activity or substrate specificity, probably by inducing a conformational change in the catalytic subunit, a direct target of the PPIase. Can reactivate inactive phosphatase PP2A-phosphatase methylesterase complexes (PP2Ai) in presence of ATP and Mg(2+) by dissociating the inactive form from the complex. This chain is Serine/threonine-protein phosphatase 2A activator 1 (RRD1), found in Mycosarcoma maydis (Corn smut fungus).